Here is a 357-residue protein sequence, read N- to C-terminus: Acyl-coenzyme A diphosphatase NUDT19 (357 aa).

One can recognise a Nudix hydrolase domain in the interval 10 to 242 (AATVMLAAGW…IWLAPPQFYE (233 aa)). The tract at residues 72–94 (PRFGLGPEPPRQPPFPGLSHGDA) is disordered. Pro residues predominate over residues 78–87 (PEPPRQPPFP). A Nudix box motif is present at residues 97 to 118 (AALPDDVALRICAIRETFEEAG). Glu-112 and Glu-116 together coordinate Mg(2+). Residue Lys-300 is modified to N6-succinyllysine. The short motif at 355–357 (AHL) is the Microbody targeting signal element.

Belongs to the Nudix hydrolase family. In terms of assembly, monomer. The cofactor is Mg(2+). Mn(2+) is required as a cofactor.

It localises to the peroxisome. The enzyme catalyses an acyl-CoA + H2O = an acyl-4'-phosphopantetheine + adenosine 3',5'-bisphosphate + 2 H(+). The catalysed reaction is CoA + H2O = (R)-4'-phosphopantetheine + adenosine 3',5'-bisphosphate + 2 H(+). It catalyses the reaction hexanoyl-CoA + H2O = hexanoyl-4'-phosphopantetheine + adenosine 3',5'-bisphosphate + 2 H(+). It carries out the reaction octanoyl-CoA + H2O = S-octanoyl-4'-phosphopantetheine + adenosine 3',5'-bisphosphate + 2 H(+). The enzyme catalyses butanoyl-CoA + H2O = S-butanoyl-4'-phosphopantetheine + adenosine 3',5'-bisphosphate + 2 H(+). The catalysed reaction is propanoyl-CoA + H2O = propanoyl-4'-phosphopantetheine + adenosine 3',5'-bisphosphate + 2 H(+). It catalyses the reaction malonyl-CoA + H2O = malonyl-4'-phosphopantetheine + adenosine 3',5'-bisphosphate + 2 H(+). It carries out the reaction succinyl-CoA + H2O = succinyl-4'-phosphopantetheine + adenosine 3',5'-bisphosphate + 2 H(+). The enzyme catalyses choloyl-CoA + H2O = S-choloyl-4'-phosphopantetheine + adenosine 3',5'-bisphosphate + 2 H(+). The catalysed reaction is 4,8-dimethylnonanoyl-CoA + H2O = S-(4,8-dimethylnonanoyl)-4'-phosphopantetheine + adenosine 3',5'-bisphosphate + 2 H(+). It catalyses the reaction (9Z,12Z,15Z)-octadecatrienoyl-CoA + H2O = S-(9Z,12Z,15Z-octadecatrienoyl)-4'-phosphopantetheine + adenosine 3',5'-bisphosphate + 2 H(+). It carries out the reaction (9Z,12Z)-octadecadienoyl-CoA + H2O = S-(9Z,12Z-octadecadienoyl)-4'-phosphopantetheine + adenosine 3',5'-bisphosphate + 2 H(+). The enzyme catalyses (9Z)-hexadecenoyl-CoA + H2O = S-(9Z-hexadecenoyl)-4'-phosphopantetheine + adenosine 3',5'-bisphosphate + 2 H(+). The catalysed reaction is (9Z)-tetradecenoyl-CoA + H2O = S-(9Z-tetradecenoyl)-4'-phosphopantetheine + adenosine 3',5'-bisphosphate + 2 H(+). It catalyses the reaction (6Z)-octenoyl-CoA + H2O = S-(6Z-octenoyl)-4'-phosphopantetheine + adenosine 3',5'-bisphosphate + 2 H(+). It carries out the reaction hexadecanoyl-CoA + H2O = S-hexadecanoyl-4'-phosphopantetheine + adenosine 3',5'-bisphosphate + 2 H(+). The enzyme catalyses tetradecanoyl-CoA + H2O = tetradecanoyl-4'-phosphopantetheine + adenosine 3',5'-bisphosphate + 2 H(+). The catalysed reaction is dodecanoyl-CoA + H2O = S-dodecanoyl-4'-phosphopantetheine + adenosine 3',5'-bisphosphate + 2 H(+). It catalyses the reaction a 5'-end CoA-ribonucleoside in mRNA + H2O = a 5'-end phospho-adenosine-phospho-ribonucleoside in mRNA + (R)-4'-phosphopantetheine + 2 H(+). Fatty acyl-coenzyme A (CoA) diphosphatase that hydrolyzes fatty acyl-CoA to yield acyl-4'-phosphopantetheine and adenosine 3',5'-bisphosphate. Mediates the hydrolysis of a wide range of CoA esters, including choloyl-CoA and branched-chain fatty-acyl-CoA esters and at low substrate concentrations medium and long-chain fatty-acyl-CoA esters are the primary substrates. Highest activity seen with medium-chain acyl-CoA esters and higher rates of activity seen with the unsaturated acyl-CoA esters compared with the saturated esters. Exhibits decapping activity towards dpCoA-capped RNAs in vitro. In Mus caroli (Ryukyu mouse), this protein is Acyl-coenzyme A diphosphatase NUDT19 (Nudt19).